Consider the following 282-residue polypeptide: D-arabinitol 2-dehydrogenase [ribulose-forming] (282 aa).

2 residues coordinate NADP(+): leucine 32 and asparagine 53. Residue serine 170 is the Proton donor of the active site. Residues tyrosine 185, lysine 189, isoleucine 218, and threonine 220 each contribute to the NADP(+) site. The active-site Proton acceptor is tyrosine 185. Lysine 189 acts as the Lowers pKa of active site Tyr in catalysis.

This sequence belongs to the short-chain dehydrogenases/reductases (SDR) family.

The catalysed reaction is D-arabinitol + NAD(+) = D-ribulose + NADH + H(+). It participates in carbohydrate metabolism; D-arabinitol metabolism. Catalyzes the NAD(+)-dependent oxidation of D-arabinitol at carbon 4 to produce D-ribulose. The polypeptide is D-arabinitol 2-dehydrogenase [ribulose-forming] (ARD) (Candida tropicalis (Yeast)).